The sequence spans 154 residues: MKNNLINMDEINKLIKPIVEELNYELYYIEYVREQNENYLRIYIDSSKGINLEDCEKVSRKVSDILDEKDPISDSYYLEVSSPGIERVLYTEEHLHKYTNNQIIVKLAKLFEGSREHQGNLISFNDDTVTIEKENESINIPRERIKKIILKGEF.

It belongs to the RimP family.

It is found in the cytoplasm. In terms of biological role, required for maturation of 30S ribosomal subunits. The polypeptide is Ribosome maturation factor RimP (Clostridium novyi (strain NT)).